The sequence spans 77 residues: Small ribosomal subunit protein uS17 (77 aa).

This sequence belongs to the universal ribosomal protein uS17 family. In terms of assembly, part of the 30S ribosomal subunit.

Its function is as follows. One of the primary rRNA binding proteins, it binds specifically to the 5'-end of 16S ribosomal RNA. This chain is Small ribosomal subunit protein uS17, found in Rickettsia conorii (strain ATCC VR-613 / Malish 7).